The chain runs to 693 residues: Elongation factor G 1 (693 aa).

In terms of domain architecture, tr-type G spans 4 to 281 (NKLRNIGISA…AVTRFLPSPH (278 aa)). GTP is bound by residues 13 to 20 (AHIDSGKT), 80 to 84 (DTPGH), and 134 to 137 (NKCD).

It belongs to the TRAFAC class translation factor GTPase superfamily. Classic translation factor GTPase family. EF-G/EF-2 subfamily.

The protein localises to the cytoplasm. Its function is as follows. Catalyzes the GTP-dependent ribosomal translocation step during translation elongation. During this step, the ribosome changes from the pre-translocational (PRE) to the post-translocational (POST) state as the newly formed A-site-bound peptidyl-tRNA and P-site-bound deacylated tRNA move to the P and E sites, respectively. Catalyzes the coordinated movement of the two tRNA molecules, the mRNA and conformational changes in the ribosome. The sequence is that of Elongation factor G 1 (fusA) from Borreliella burgdorferi (strain ATCC 35210 / DSM 4680 / CIP 102532 / B31) (Borrelia burgdorferi).